A 229-amino-acid polypeptide reads, in one-letter code: 5'-methylthioadenosine/S-adenosylhomocysteine nucleosidase (229 aa).

Glu12 serves as the catalytic Proton acceptor. Substrate-binding positions include Gly78, Ile152, and 173–174 (ME). Asp197 functions as the Proton donor in the catalytic mechanism.

Belongs to the PNP/UDP phosphorylase family. MtnN subfamily.

It catalyses the reaction S-adenosyl-L-homocysteine + H2O = S-(5-deoxy-D-ribos-5-yl)-L-homocysteine + adenine. The enzyme catalyses S-methyl-5'-thioadenosine + H2O = 5-(methylsulfanyl)-D-ribose + adenine. It carries out the reaction 5'-deoxyadenosine + H2O = 5-deoxy-D-ribose + adenine. Its pathway is amino-acid biosynthesis; L-methionine biosynthesis via salvage pathway; S-methyl-5-thio-alpha-D-ribose 1-phosphate from S-methyl-5'-thioadenosine (hydrolase route): step 1/2. Catalyzes the irreversible cleavage of the glycosidic bond in both 5'-methylthioadenosine (MTA) and S-adenosylhomocysteine (SAH/AdoHcy) to adenine and the corresponding thioribose, 5'-methylthioribose and S-ribosylhomocysteine, respectively. Also cleaves 5'-deoxyadenosine, a toxic by-product of radical S-adenosylmethionine (SAM) enzymes, into 5-deoxyribose and adenine. The chain is 5'-methylthioadenosine/S-adenosylhomocysteine nucleosidase from Histophilus somni (strain 2336) (Haemophilus somnus).